The following is a 299-amino-acid chain: Tetrahydromethanopterin S-methyltransferase subunit E (299 aa).

Transmembrane regions (helical) follow at residues 57 to 77 (AISG…TIAW), 80 to 100 (INAG…AAIV), 133 to 153 (IGPI…AAYL), 158 to 178 (LGNP…VGAI), 226 to 246 (YFCS…IIFL), and 262 to 282 (VTKT…AAVI).

Belongs to the MtrE family. In terms of assembly, the complex is composed of 8 subunits; MtrA, MtrB, MtrC, MtrD, MtrE, MtrF, MtrG and MtrH.

It localises to the cell membrane. The catalysed reaction is 5-methyl-5,6,7,8-tetrahydromethanopterin + coenzyme M + 2 Na(+)(in) = 5,6,7,8-tetrahydromethanopterin + methyl-coenzyme M + 2 Na(+)(out). Its pathway is one-carbon metabolism; methanogenesis from CO(2); methyl-coenzyme M from 5,10-methylene-5,6,7,8-tetrahydromethanopterin: step 2/2. Functionally, part of a complex that catalyzes the formation of methyl-coenzyme M and tetrahydromethanopterin from coenzyme M and methyl-tetrahydromethanopterin. This is an energy-conserving, sodium-ion translocating step. The sequence is that of Tetrahydromethanopterin S-methyltransferase subunit E from Methanococcus maripaludis (strain C7 / ATCC BAA-1331).